The following is a 1451-amino-acid chain: MESNNVEEVTDKFGGCLSLDTEKMGKYDRYRQKGKEAALNGELPRALELFQLAYQLQPSEKLKKRIQAIQDLIQREDEEDEEEEEEFVNVNNSGLKLYKGLYDKLYDHQKEGVAFLYSLYRDGRKGGILADDMGLGKTIQVISFLSGMYDAELANHTLLVMPTSLIKNWVREFAKWTPGMRVKEFHGSSKTERNRNLERIQRKGGVIITTYQMLINNYEQLGSNGHREFKWDYVILDEAHKIKTSSTKTAKSAHAIPAKNRVLLTGTPVQNNLREMWALFDFACQGSLLGTSKTFKTEYENPITRAREKDATPGEKALGLRISQNLTDIIKPYFLRRTKADVQQKKLKLEEGFEEEEDQENKCPNAREGVEMPSLTRKNDLIVWTYLSSVQEDIYNKFISLDQIKELLTTTRSPLAELTVLKKLCDHPRLLSQRAVIQLGLERGSDSELVHSDESESAVSQIDNISDHTLIEESGKLQFVVSLMECLREEGHRTLIFSQSRKMLDIMERVLRNRNFRLLRLDGTVTQLAEREKRISLFQTDKRYTIFLLTTQVGGVGITLTGANRVVIFDPSWNPATDAQAVDRAYRIGQTENVIIYRLITCGTVEEKIYRRQVFKDSLIRQTTGDKKNPFRYFSKQELRELFKLEDTRSSSTQQQLQAMHAQSRRSDTSLDHHIARLHSMEMFGISDHDLMFTKEPAADEDDPEDAESHHYIQTRVQKAQELMQAESELHGQLLDSMAQNTEPAWLRQMGQPNSSIRDRPAPPRIKNEPVTVDLTHNSFDEPEFEEDEQNLPSAEDAEMETASEDVEVIGDEDLGDKVISSEVEVVGEEVEVVAEEVEDAGEVEVVSEEVEGVGVEVEDVGVEVEDAGVEVEDAGVEVEDAGVEVEDAGEVEVVSGEGQVQPKSPQSGGEWNLQIVKTEVSPIAEKFADVITLDDTSDEADSSDFNTESKQQNSSQRFQSPSLQFPKLDDLSGASNTLGNEEVEPEKCHSQVLSSPLSQHEATTDEPFKAEMEMPHGNFNLLLEDSADMYFPEDEEVHEVEESAAEESPEFQLQMDVSGERLEEPSINHDKQNNGEFVNYNDSEVSKRESLLKIRSTPNESVDDSFVHSVRTKKRQVISDTEEEEEEEEESEKPCLTSSPFIDAISRLGSSTPKAVLVDGARLRRSLNASVASRRSFVVSLLENESDEESNEDKTKSSGASETCADELVEEVQTSSGDNSKSYETSEANGTLADELVEEEGEYREGKNTSDKVSESNETHSEEFAEEEKPSGDKSESYEISEASETHTDNSEEEIIGDHTGSYKISESSEADESVVEEEEPSGETLNTEESEMGEEEESAELIAGQEQEEWHSAVLESTGDVELDSNETMDQCAPKTVPVETHVLPVSSTNTAAEASDNKYNLLVLSGKQSLAEGRKQEALDFFLKAIDINTGDPEIQLLIIQLYRQLSQ.

The TPR 1 repeat unit spans residues 27-60 (YDRYRQKGKEAALNGELPRALELFQLAYQLQPSE). A Helicase ATP-binding domain is found at 118-286 (SLYRDGRKGG…WALFDFACQG (169 aa)). ATP is bound at residue 131–138 (DDMGLGKT). A DEAH box motif is present at residues 237 to 240 (DEAH). One can recognise a Helicase C-terminal domain in the interval 479 to 639 (FVVSLMECLR…PFRYFSKQEL (161 aa)). 7 disordered regions span residues 647–669 (DTRS…RSDT), 778–804 (NSFD…ETAS), 935–1006 (DDTS…ATTD), 1035–1054 (DEEV…EFQL), 1063–1083 (LEEP…NYND), 1096–1140 (RSTP…LTSS), and 1182–1343 (LLEN…SAEL). The segment covering 781–804 (DEPEFEEDEQNLPSAEDAEMETAS) has biased composition (acidic residues). 2 stretches are compositionally biased toward polar residues: residues 944 to 964 (SDFN…SPSL) and 992 to 1002 (QVLSSPLSQHE). The residue at position 961 (Ser-961) is a Phosphoserine. Acidic residues predominate over residues 1035–1050 (DEEVHEVEESAAEESP). Over residues 1063-1074 (LEEPSINHDKQN) the composition is skewed to basic and acidic residues. Positions 1121-1132 (DTEEEEEEEEES) are enriched in acidic residues. Residues 1213–1230 (VQTSSGDNSKSYETSEAN) are compositionally biased toward polar residues. Positions 1244 to 1278 (YREGKNTSDKVSESNETHSEEFAEEEKPSGDKSES) are enriched in basic and acidic residues. Residues 1310 to 1341 (SEADESVVEEEEPSGETLNTEESEMGEEEESA) show a composition bias toward acidic residues. Residues 1402–1435 (YNLLVLSGKQSLAEGRKQEALDFFLKAIDINTGD) form a TPR 2 repeat.

The protein belongs to the SNF2/RAD54 helicase family.

The protein resides in the chromosome. Its subcellular location is the centromere. The protein localises to the kinetochore. The enzyme catalyses ATP + H2O = ADP + phosphate + H(+). DNA helicase that acts as a tension sensor that associates with catenated DNA which is stretched under tension until it is resolved during anaphase. Functions as ATP-dependent DNA translocase. Can promote Holliday junction branch migration (in vitro). This is DNA excision repair protein ERCC-6-like (ercc6l) from Danio rerio (Zebrafish).